A 175-amino-acid polypeptide reads, in one-letter code: uncharacterized protein (175 aa).

This is an uncharacterized protein from Archaeoglobus fulgidus (strain ATCC 49558 / DSM 4304 / JCM 9628 / NBRC 100126 / VC-16).